Reading from the N-terminus, the 575-residue chain is Manganese transporter SMF1 (575 aa).

At 1 to 70 (MVNVGPSHAA…TYVSKRQVMR (70 aa)) the chain is on the extracellular side. The residue at position 24 (serine 24) is a Phosphoserine. Residues lysine 33 and lysine 34 each participate in a glycyl lysine isopeptide (Lys-Gly) (interchain with G-Cter in ubiquitin) cross-link. The chain crosses the membrane as a helical span at residues 71–91 (DIFAKYLKFIGPGLMVSVAYI). At 92–108 (DPGNYSTAVDAGASNQF) the chain is on the cytoplasmic side. The helical transmembrane segment at 109-129 (SLLCIILLSNFIAIFLQCLCI) threads the bilayer. At 130-156 (KLGSVTGLDLSRACREYLPRWLNWTLY) the chain is on the extracellular side. The chain crosses the membrane as a helical span at residues 157–177 (FFAECAVIATDIAEVIGTAIA). Residues 178–179 (LN) lie on the Cytoplasmic side of the membrane. The helical transmembrane segment at 180 to 200 (ILIKVPLPAGVAITVVDVFLI) threads the bilayer. Residues 201-218 (MFTYKPGASSIRFIRIFE) are Extracellular-facing. The helical transmembrane segment at 219 to 239 (CFVAVLVVGVCICFAIELAYI) threads the bilayer. At 240–266 (PKSTSVKQVFRGFVPSAQMFDHNGIYT) the chain is on the cytoplasmic side. Residues 267 to 287 (AISILGATVMPHSLFLGSALV) traverse the membrane as a helical segment. Residues 288 to 344 (QPRLLDYDVKHGNYTVSEEQDKVKKSKSTEEIMEEKYFNYRPTNAAIKYCMKYSMVE) lie on the Extracellular side of the membrane. A helical membrane pass occupies residues 345–365 (LSITLFTLALFVNCAILVVAG). Over 366 to 396 (STLYNSPEADGADLFTIHELLSRNLAPAAGT) the chain is Cytoplasmic. The helical transmembrane segment at 397–417 (IFMLALLLSGQSAGVVCTMSG) threads the bilayer. Residues 418–463 (QIVSEGHINWKLQPWQRRLATRCISIIPCLVISICIGREALSKALN) are Extracellular-facing. A helical membrane pass occupies residues 464 to 484 (ASQVVLSIVLPFLVAPLIFFT). Residues 485–543 (CKKSIMKTEITVDHTEEDSHNHQNNNDRSAGSVIEQDGSSGMEIENGKDVKIVYMANNW) are Cytoplasmic-facing. The segment at 498–517 (HTEEDSHNHQNNNDRSAGSV) is disordered. Residues 544–564 (IITVIAIIVWLFLSLLNVYAI) traverse the membrane as a helical segment. Residues 565–575 (VQLGMSHGDIS) lie on the Extracellular side of the membrane.

This sequence belongs to the NRAMP family.

It localises to the cell membrane. The enzyme catalyses Mn(2+)(in) = Mn(2+)(out). High-affinity manganese transporter involved in manganese uptake from the extracellular environment. Also contributes to cellular accumulation of other divalent metal ions such as cadmium, cobalt, copper, iron and nickel. This chain is Manganese transporter SMF1 (SMF1), found in Saccharomyces cerevisiae (strain ATCC 204508 / S288c) (Baker's yeast).